The chain runs to 480 residues: tRNA-2-methylthio-N(6)-dimethylallyladenosine synthase (480 aa).

The region spanning 3-120 (KKLYIKTWGC…LPEMLNQLQH (118 aa)) is the MTTase N-terminal domain. 6 residues coordinate [4Fe-4S] cluster: C12, C49, C83, C157, C161, and C164. The Radical SAM core domain occupies 143–375 (KADGASAFVS…QEQITHQALR (233 aa)). The 64-residue stretch at 378–441 (RQMLNTEQRV…ANSLRGELVR (64 aa)) folds into the TRAM domain.

Belongs to the methylthiotransferase family. MiaB subfamily. In terms of assembly, monomer. The cofactor is [4Fe-4S] cluster.

The protein localises to the cytoplasm. The enzyme catalyses N(6)-dimethylallyladenosine(37) in tRNA + (sulfur carrier)-SH + AH2 + 2 S-adenosyl-L-methionine = 2-methylsulfanyl-N(6)-dimethylallyladenosine(37) in tRNA + (sulfur carrier)-H + 5'-deoxyadenosine + L-methionine + A + S-adenosyl-L-homocysteine + 2 H(+). Functionally, catalyzes the methylthiolation of N6-(dimethylallyl)adenosine (i(6)A), leading to the formation of 2-methylthio-N6-(dimethylallyl)adenosine (ms(2)i(6)A) at position 37 in tRNAs that read codons beginning with uridine. This is tRNA-2-methylthio-N(6)-dimethylallyladenosine synthase from Colwellia psychrerythraea (strain 34H / ATCC BAA-681) (Vibrio psychroerythus).